Consider the following 513-residue polypeptide: V-type proton ATPase subunit B, kidney isoform (513 aa).

Arg394 contributes to the ATP binding site. Positions 510–513 (DTAL) match the PDZ-binding motif.

The protein belongs to the ATPase alpha/beta chains family. As to quaternary structure, V-ATPase is a heteromultimeric enzyme made up of two complexes: the ATP-hydrolytic V1 complex and the proton translocation V0 complex. The V1 complex consists of three catalytic AB heterodimers that form a heterohexamer, three peripheral stalks each consisting of EG heterodimers, one central rotor including subunits D and F, and the regulatory subunits C and H. The proton translocation complex V0 consists of the proton transport subunit a, a ring of proteolipid subunits c9c'', rotary subunit d, subunits e and f, and the accessory subunits ATP6AP1/Ac45 and ATP6AP2/PRR. Forms a complex with NHERF1 and SCL4A7. Kidney; localizes to early distal nephron, encompassing thick ascending limbs and distal convoluted tubules (at protein level). Expressed in the cochlea and endolymphatic sac.

The protein localises to the apical cell membrane. It localises to the basolateral cell membrane. In terms of biological role, non-catalytic subunit of the V1 complex of vacuolar(H+)-ATPase (V-ATPase), a multisubunit enzyme composed of a peripheral complex (V1) that hydrolyzes ATP and a membrane integral complex (V0) that translocates protons. V-ATPase is responsible for acidifying and maintaining the pH of intracellular compartments and in some cell types, is targeted to the plasma membrane, where it is responsible for acidifying the extracellular environment. Essential for the proper assembly and activity of V-ATPase. In renal intercalated cells, mediates secretion of protons (H+) into the urine thereby ensuring correct urinary acidification. Required for optimal olfactory function by mediating the acidification of the nasal olfactory epithelium. In Homo sapiens (Human), this protein is V-type proton ATPase subunit B, kidney isoform (ATP6V1B1).